A 663-amino-acid chain; its full sequence is MNFRYNHTPFGYKRRQTREVKVGDVKIGGNNPIVIQSMINSDTTDTKGTVKQILELERTGCEIVRFTVPSQVDADNLPSIRQELKKAGSKIPLVADIHFTPSVAMKAVEYVEKVRINPGNFADKKKFAVRDYTDSEYDEELERISAIFSPLVLRCKELGVSMRIGTNHGSLSDRIMNRYGDTPQGMVESALEFIRIAESLNYYDIVVSMKASNPQVMVQAYRMLASRFNELKMDYPLHLGVTEAGDGKDGRIKSAIGIGSLLEDGLGDTIRVSLTEDPVLEIPVARLLAEKFNKRIVKPEPVRGYSEFRNPFTYERFYSSEIKVGTFEAGENHPVRVETVLPFENSNSFLANIAKLYQYGKSFSIEPESILIDSPSPDQLKEISEAAAALSIPVGILLGKNVSLNEKLQNELRGFPKVVFDPFLQFQDGKKMLSFLQERQNAGLYTEIHTSGAKIESFKGLPETLSEIGIKNVLFSIESKEILYDYRKLGSILSQHEFPILLHGSFSNPEEALYDSAIGIGGLLIDGIGDLIRIKTPKMKDIEEIFQLSYDLLQGTRLRLTKTEYISCPSCGRTLFNLQETTARIKSRTGHLKGVKIAVMGCIVNGPGEMADADFGYVGAGPGKVHLYRGKEIVMKNVPSEVADEKLVELIKKHGLWQDVINV.

[4Fe-4S] cluster-binding residues include cysteine 568, cysteine 571, cysteine 602, and glutamate 609.

The protein belongs to the IspG family. It depends on [4Fe-4S] cluster as a cofactor.

It carries out the reaction (2E)-4-hydroxy-3-methylbut-2-enyl diphosphate + oxidized [flavodoxin] + H2O + 2 H(+) = 2-C-methyl-D-erythritol 2,4-cyclic diphosphate + reduced [flavodoxin]. It participates in isoprenoid biosynthesis; isopentenyl diphosphate biosynthesis via DXP pathway; isopentenyl diphosphate from 1-deoxy-D-xylulose 5-phosphate: step 5/6. Functionally, converts 2C-methyl-D-erythritol 2,4-cyclodiphosphate (ME-2,4cPP) into 1-hydroxy-2-methyl-2-(E)-butenyl 4-diphosphate. The chain is 4-hydroxy-3-methylbut-2-en-1-yl diphosphate synthase (flavodoxin) from Leptospira borgpetersenii serovar Hardjo-bovis (strain L550).